Reading from the N-terminus, the 438-residue chain is Ribosomal protein uS12 methylthiotransferase RimO (438 aa).

The MTTase N-terminal domain occupies 4–120 (HSLFLLSLGC…ILASLGARYR (117 aa)). Residues C13, C49, C83, C144, C148, and C151 each coordinate [4Fe-4S] cluster. One can recognise a Radical SAM core domain in the interval 130–359 (LTPSHYAYLK…MELQEAVAES (230 aa)). The TRAM domain maps to 362–429 (REFEGKEIEV…AHELYGEIVQ (68 aa)).

Belongs to the methylthiotransferase family. RimO subfamily. [4Fe-4S] cluster is required as a cofactor.

The protein localises to the cytoplasm. The enzyme catalyses L-aspartate(89)-[ribosomal protein uS12]-hydrogen + (sulfur carrier)-SH + AH2 + 2 S-adenosyl-L-methionine = 3-methylsulfanyl-L-aspartate(89)-[ribosomal protein uS12]-hydrogen + (sulfur carrier)-H + 5'-deoxyadenosine + L-methionine + A + S-adenosyl-L-homocysteine + 2 H(+). In terms of biological role, catalyzes the methylthiolation of an aspartic acid residue of ribosomal protein uS12. The polypeptide is Ribosomal protein uS12 methylthiotransferase RimO (Chlorobium chlorochromatii (strain CaD3)).